We begin with the raw amino-acid sequence, 321 residues long: ATP-dependent 6-phosphofructokinase (321 aa).

ATP is bound at residue G12. ADP is bound by residues 22-26 (RGVVR) and 55-60 (RYSVSD). ATP contacts are provided by residues 73–74 (RF) and 103–106 (GDGS). Residue D104 participates in Mg(2+) binding. 127-129 (TID) contributes to the substrate binding site. The active-site Proton acceptor is the D129. R156 serves as a coordination point for ADP. Substrate-binding positions include R164 and 171–173 (MGR). ADP contacts are provided by residues 187-189 (GCE) and 215-217 (KRH). Residues E224, R245, and 251–254 (HVQR) each bind substrate.

Belongs to the phosphofructokinase type A (PFKA) family. ATP-dependent PFK group I subfamily. Prokaryotic clade 'B1' sub-subfamily. Homotetramer. Mg(2+) serves as cofactor.

The protein localises to the cytoplasm. The enzyme catalyses beta-D-fructose 6-phosphate + ATP = beta-D-fructose 1,6-bisphosphate + ADP + H(+). It participates in carbohydrate degradation; glycolysis; D-glyceraldehyde 3-phosphate and glycerone phosphate from D-glucose: step 3/4. Allosterically activated by ADP and other diphosphonucleosides, and allosterically inhibited by phosphoenolpyruvate. Catalyzes the phosphorylation of D-fructose 6-phosphate to fructose 1,6-bisphosphate by ATP, the first committing step of glycolysis. This is ATP-dependent 6-phosphofructokinase from Mannheimia succiniciproducens (strain KCTC 0769BP / MBEL55E).